Reading from the N-terminus, the 244-residue chain is Carbonyl reductase [NADPH] 2 (244 aa).

11–39 (LVTGAGKGIGRDTVKALHASGAKVVAVTR) contributes to the NADP(+) binding site. Ser42 carries the post-translational modification Phosphoserine. Ser136 provides a ligand contact to substrate. Residue Tyr149 is the Proton acceptor of the active site. Ser176 bears the Phosphoserine mark.

It belongs to the short-chain dehydrogenases/reductases (SDR) family. Homotetramer. In terms of tissue distribution, predominantly expressed in lung, in ciliated cells, non-ciliated bronchiolar cells and type-II alveolar pneumocytes. Also detected in adipose tissue (at protein level). Low expression in testis, heart, kidney, spleen, brain and liver.

It localises to the mitochondrion matrix. The catalysed reaction is a secondary alcohol + NADP(+) = a ketone + NADPH + H(+). May function in the pulmonary metabolism of endogenous carbonyl compounds, such as aliphatic aldehydes and ketones derived from lipid peroxidation, 3-ketosteroids and fatty aldehydes, as well as in xenobiotic metabolism. This is Carbonyl reductase [NADPH] 2 (Cbr2) from Mus musculus (Mouse).